The sequence spans 577 residues: Proline--tRNA ligase (577 aa).

This sequence belongs to the class-II aminoacyl-tRNA synthetase family. ProS type 1 subfamily. In terms of assembly, homodimer.

It localises to the cytoplasm. It catalyses the reaction tRNA(Pro) + L-proline + ATP = L-prolyl-tRNA(Pro) + AMP + diphosphate. Catalyzes the attachment of proline to tRNA(Pro) in a two-step reaction: proline is first activated by ATP to form Pro-AMP and then transferred to the acceptor end of tRNA(Pro). As ProRS can inadvertently accommodate and process non-cognate amino acids such as alanine and cysteine, to avoid such errors it has two additional distinct editing activities against alanine. One activity is designated as 'pretransfer' editing and involves the tRNA(Pro)-independent hydrolysis of activated Ala-AMP. The other activity is designated 'posttransfer' editing and involves deacylation of mischarged Ala-tRNA(Pro). The misacylated Cys-tRNA(Pro) is not edited by ProRS. In Helicobacter pylori (strain HPAG1), this protein is Proline--tRNA ligase.